The primary structure comprises 2527 residues: Highly reducing polyketide synthase poxF (2527 aa).

One can recognise a Ketosynthase family 3 (KS3) domain in the interval 20-445; that stretch reads VMPIAIIGMA…GANAHVIVES (426 aa). Catalysis depends on for beta-ketoacyl synthase activity residues Cys193, His328, and His368. The malonyl-CoA:ACP transacylase (MAT) domain stretch occupies residues 560 to 882; sequence VFTGQGAQWF…TYASCLSRGQ (323 aa). Residues 951-1086 form an N-terminal hotdog fold region; sequence HDLLGVPAAG…GLCCTPSPAQ (136 aa). Residues 951-1243 form a dehydratase (DH) domain region; it reads HDLLGVPAAG…SVRVINNAGT (293 aa). Residues 951 to 1270 form the PKS/mFAS DH domain; that stretch reads HDLLGVPAAG…CQSLGSSAVV (320 aa). His983 serves as the catalytic Proton acceptor; for dehydratase activity. The segment at 1108 to 1270 is C-terminal hotdog fold; the sequence is AWRILNPADT…CQSLGSSAVV (163 aa). The active-site Proton donor; for dehydratase activity is Asp1174. Residues 1406 to 1587 are methyltransferase (CMet) domain; it reads EDQAEWSSVS…RLLAKAGFEP (182 aa). The tract at residues 1823–2137 is enoyl reductase (ER) (ER) domain; the sequence is GLLNSLVFTE…TGKHMGKIVL (315 aa). The segment at 2162-2339 is ketoreductase (KR) domain; that stretch reads TYLLVGGVGG…AVSIDLGMVS (178 aa). The region spanning 2445-2522 is the Carrier domain; that stretch reads EVTTLIQSAL…GLAGQMAKKS (78 aa). Ser2482 is modified (O-(pantetheine 4'-phosphoryl)serine).

Its pathway is secondary metabolite biosynthesis. Highly reducing polyketide synthase; part of the gene cluster that mediates the biosynthesis of oxaleimides, cytotoxic compounds containing an unusual disubstituted succinimide moiety. The first step of the pathway is provided by the HR-PKS poxF that serves in a new mode of collaborative biosynthesis with the PKS-NRPS poxE, by providing the olefin containing amino acid substrate via the synthesis of an ACP-bound dec-4-enoate. The cytochrome P450 monooxygenase poxM-catalyzed oxidation at the alpha-position creates the enzyme-bound 2-hydroxydec-4-enoyl-ACP thioester, which may be prone to spontaneous hydrolysis to yield 2-hydroxydec-4-enoic acid due to increased electrophilicity of the carbonyl. 2-hydroxydec-4-enoic acid can then be further oxidized by poxM to yield the alpha-ketoacid 2-oxodec-4-enoicacid, which is reductively aminated by the aminotransferase poxL to yield (S,E)-2-aminodec-4-enoic acid. The Hybrid PKS-NRPS synthetase poxE then performs condensation between the octaketide product of its PKS modules and the amino group of (S,E)-2-aminodec-4-enoic acid which is activated and incorporated by the adenylation domain. The resulting aminoacyl product can be cyclized by the Diels-Alderase PoxQ and reductively released by the reductive (R) domain of poxE to yield an aldehyde intermediate. The released aldehyde is then substrate for a Knoevenagel condensation by the hydrolyase poxO followed by an oxidation at the 5-position of the pyrrolidone ring. The presence of the olefin from the amino acid building block allows for migration of the substituted allyl group to occur. This allylic transposition reaction takes place in a conjugate addition, semipinacol-like fashion to yield a succinimide intermediate. Iterative two-electron oxidations of the C7 methyl of the succinimide intermediate to the carboxylic acid can be catalyzed by one of two remaining cytochrome P450 monooxygenasess poxC or poxD to yield oxaleimide A. Subsequent oxidation yields the maleimide scaffold oxaleimide I. Both oxaleimide A and oxaleimide I can undergo oxidative modifications in the decalin ring to yield the series of products oxaleimides B to H. This chain is Highly reducing polyketide synthase poxF, found in Penicillium oxalicum.